Here is a 276-residue protein sequence, read N- to C-terminus: Undecaprenyl-diphosphatase (276 aa).

Transmembrane regions (helical) follow at residues 1–21, 39–59, 84–104, 115–135, 159–179, 190–210, 222–242, and 253–273; these read MSWL…FLPV, AGAS…LVYF, YRLG…GLLL, LWAI…AEYF, LALL…LFLG, FLLA…DAFA, QLLV…AWFL, and FVGY…TGVV.

The protein belongs to the UppP family.

It is found in the cell membrane. It catalyses the reaction di-trans,octa-cis-undecaprenyl diphosphate + H2O = di-trans,octa-cis-undecaprenyl phosphate + phosphate + H(+). Its function is as follows. Catalyzes the dephosphorylation of undecaprenyl diphosphate (UPP). Confers resistance to bacitracin. The protein is Undecaprenyl-diphosphatase of Mycobacterium sp. (strain KMS).